The sequence spans 160 residues: Succinate dehydrogenase assembly factor 2-B, mitochondrial (160 aa).

The transit peptide at 1 to 23 (MLRQLKLTLNISRWIFMPWQRHA) directs the protein to the mitochondrion.

Belongs to the SDHAF2 family. In terms of assembly, interacts with the flavoprotein subunit within the SDH catalytic dimer.

Its subcellular location is the mitochondrion matrix. In terms of biological role, plays an essential role in the assembly of succinate dehydrogenase (SDH), an enzyme complex (also referred to as respiratory complex II) that is a component of both the tricarboxylic acid (TCA) cycle and the mitochondrial electron transport chain, and which couples the oxidation of succinate to fumarate with the reduction of ubiquinone (coenzyme Q) to ubiquinol. Required for flavinylation (covalent attachment of FAD) of the flavoprotein subunit of the SDH catalytic dimer. This chain is Succinate dehydrogenase assembly factor 2-B, mitochondrial, found in Drosophila pseudoobscura pseudoobscura (Fruit fly).